We begin with the raw amino-acid sequence, 628 residues long: MSNGLPISIGRPCTHDSQRSLSAPNSRIHSGFNSLLDTDLPMVHSEGTSTPTQLLRHPNIWFGNLPPPPRRPQDNRDFSPLHPLVFPGHHSQLRHVHETQQVQQTCPGKLKLSGAEELPPAPQRQHSLPLHITRPSRFPHHFHARRPDVLPSVPDHGPVLAETKPRTSVRQPRSATRGPSFRPILLPKVVHVHDDPPHSSLRPRGSRSRQLQPTVRRPLLAPNQFHSPRQPPPLSDDPGILGPRPLAPNSTRDPPPRPITPGPSNTHGLRPLSVLPRASPRRGLLPNPRRHRTSTGHIPPTTTSRPTGPPSRLQRPVHLYQSSPHTPNFRPSSIRKDALLQTGPRLGHLECLGQPANLRTSERSPPTKRRLPRSSEPNRLPKPLPEATLAPSYRHRRSYPFLPNPPAALPSIAYTSSRGKIHHSLPKGALPKEGAPPPPRRLPSPAPHPQLPLRDLGRTPGFPTPPKTPTRTPESRITASPTDIAPLDSDPVLSVRTEVHAPERRTFMDPEALRSALASLPSPPRSVGIIHTAPQTVLPANPPSPTRHLPPTSPPWILQSPVGEDAIVDSEDDSISSFYSHDFDSPSGPLRSQSPSRFRLYLRSPSTSSGIEPWSPASYDYGSAPDTD.

Disordered stretches follow at residues Met-1–Asn-25, His-141–Ser-332, Gly-347–Ser-398, Arg-418–Phe-507, and Gln-535–Asp-628. A compositionally biased stretch (low complexity) spans Pro-299–Arg-312. Residues Tyr-320–Pro-331 are compositionally biased toward polar residues. Residues Gly-434 to Gln-450 are compositionally biased toward pro residues. Basic and acidic residues predominate over residues Thr-497–Phe-507.

It belongs to the tymoviridae protein p69 family.

Functionally, acts as a suppressor of RNA-mediated gene silencing, also known as post-transcriptional gene silencing (PTGS), a mechanism of plant viral defense that limits the accumulation of viral RNAs. This chain is 69 kDa protein, found in Brassica.